Reading from the N-terminus, the 304-residue chain is Protoheme IX farnesyltransferase (304 aa).

The next 9 membrane-spanning stretches (helical) occupy residues 32-52 (VVAL…PGSV), 54-74 (LQPL…AAAF), 104-124 (ALTF…TLVN), 126-146 (LTAW…TAYL), 154-174 (IVVG…SVTG), 180-200 (ALLL…ALAI), 226-246 (CILL…LVGM), 247-267 (CGPV…YKAW), and 284-304 (FSIY…YLWV).

The protein belongs to the UbiA prenyltransferase family. Protoheme IX farnesyltransferase subfamily.

Its subcellular location is the cell inner membrane. The catalysed reaction is heme b + (2E,6E)-farnesyl diphosphate + H2O = Fe(II)-heme o + diphosphate. It functions in the pathway porphyrin-containing compound metabolism; heme O biosynthesis; heme O from protoheme: step 1/1. In terms of biological role, converts heme B (protoheme IX) to heme O by substitution of the vinyl group on carbon 2 of heme B porphyrin ring with a hydroxyethyl farnesyl side group. The polypeptide is Protoheme IX farnesyltransferase (Shewanella sediminis (strain HAW-EB3)).